The primary structure comprises 258 residues: Aspartate/glutamate leucyltransferase (258 aa).

This sequence belongs to the R-transferase family. Bpt subfamily.

Its subcellular location is the cytoplasm. It carries out the reaction N-terminal L-glutamyl-[protein] + L-leucyl-tRNA(Leu) = N-terminal L-leucyl-L-glutamyl-[protein] + tRNA(Leu) + H(+). It catalyses the reaction N-terminal L-aspartyl-[protein] + L-leucyl-tRNA(Leu) = N-terminal L-leucyl-L-aspartyl-[protein] + tRNA(Leu) + H(+). Functionally, functions in the N-end rule pathway of protein degradation where it conjugates Leu from its aminoacyl-tRNA to the N-termini of proteins containing an N-terminal aspartate or glutamate. The polypeptide is Aspartate/glutamate leucyltransferase (Rhizobium etli (strain ATCC 51251 / DSM 11541 / JCM 21823 / NBRC 15573 / CFN 42)).